We begin with the raw amino-acid sequence, 88 residues long: SPbeta prophage-derived protein BhlB (88 aa).

2 consecutive transmembrane segments (helical) span residues Leu-15–Ile-35 and Asp-45–Phe-65.

The protein belongs to the SPP1 holin family.

The protein resides in the cell membrane. May be involved in the secretion of the autolysin BlyA. The sequence is that of SPbeta prophage-derived protein BhlB (bhlB) from Bacillus subtilis (strain 168).